Reading from the N-terminus, the 111-residue chain is Large ribosomal subunit protein P2 (111 aa).

The disordered stretch occupies residues 81 to 111; the sequence is AAGGAAAPAAEEKKEEEKEESDEDMGFGLFD. At serine 101 the chain carries Phosphoserine.

It belongs to the eukaryotic ribosomal protein P1/P2 family. P1 and P2 exist as dimers at the large ribosomal subunit.

Its function is as follows. Plays an important role in the elongation step of protein synthesis. The protein is Large ribosomal subunit protein P2 of Aspergillus fumigatus (strain ATCC MYA-4609 / CBS 101355 / FGSC A1100 / Af293) (Neosartorya fumigata).